Reading from the N-terminus, the 469-residue chain is 3-isopropylmalate dehydratase large subunit (469 aa).

Cys347, Cys410, and Cys413 together coordinate [4Fe-4S] cluster.

This sequence belongs to the aconitase/IPM isomerase family. LeuC type 1 subfamily. In terms of assembly, heterodimer of LeuC and LeuD. [4Fe-4S] cluster serves as cofactor.

The enzyme catalyses (2R,3S)-3-isopropylmalate = (2S)-2-isopropylmalate. It functions in the pathway amino-acid biosynthesis; L-leucine biosynthesis; L-leucine from 3-methyl-2-oxobutanoate: step 2/4. Catalyzes the isomerization between 2-isopropylmalate and 3-isopropylmalate, via the formation of 2-isopropylmaleate. The chain is 3-isopropylmalate dehydratase large subunit from Burkholderia thailandensis (strain ATCC 700388 / DSM 13276 / CCUG 48851 / CIP 106301 / E264).